The primary structure comprises 437 residues: MTTEASNPEVNATAEVAVPVNPLLRSVTVEIPSDVVDAERNKHVQQYAKLARVPGFRKGKVPPSVIRTRFAQDINEEIVRTLIPHYFREETGKQNLQPVSQPQVTDLHLHDGEPLKFTAEFEILPEIPTTGYENIKVEHPPVEVTDAEIEDTIKSLQEQRATYDPIEDRAAEDGDFVQISFEGRDKSDPEAKPVEVPSIMVELGGSNTVQEFTENLRGTKAGDEKTFDVVYPADYGDQRLAGKSVEYHVSVKSLKKKIFPELDEAFISELGADVKTPDELRAKIREGAEHEKKHHAEHEGKDKLVDALVKLNDFPVPESMVNSQIEIRLERGLRALAQQGMRTEDMKKMDFGKLREGQREAATREVKASLLLEKIADAEKIEVSDEELDRQIAGLARQSQQSPEQVRARLTQDGSLDRIRTQIRNEKTLDLLYSRSA.

The 87-residue stretch at Gly174–Pro260 folds into the PPIase FKBP-type domain.

Belongs to the FKBP-type PPIase family. Tig subfamily.

It is found in the cytoplasm. It catalyses the reaction [protein]-peptidylproline (omega=180) = [protein]-peptidylproline (omega=0). Involved in protein export. Acts as a chaperone by maintaining the newly synthesized protein in an open conformation. Functions as a peptidyl-prolyl cis-trans isomerase. The sequence is that of Trigger factor from Koribacter versatilis (strain Ellin345).